A 427-amino-acid polypeptide reads, in one-letter code: Serine--tRNA ligase (427 aa).

231-233 (TAE) contributes to the L-serine binding site. Position 262 to 264 (262 to 264 (RSE)) interacts with ATP. Glu-285 is a binding site for L-serine. 349–352 (EISS) serves as a coordination point for ATP. Residue Ser-385 participates in L-serine binding.

It belongs to the class-II aminoacyl-tRNA synthetase family. Type-1 seryl-tRNA synthetase subfamily. As to quaternary structure, homodimer. The tRNA molecule binds across the dimer.

The protein localises to the cytoplasm. It carries out the reaction tRNA(Ser) + L-serine + ATP = L-seryl-tRNA(Ser) + AMP + diphosphate + H(+). It catalyses the reaction tRNA(Sec) + L-serine + ATP = L-seryl-tRNA(Sec) + AMP + diphosphate + H(+). It participates in aminoacyl-tRNA biosynthesis; selenocysteinyl-tRNA(Sec) biosynthesis; L-seryl-tRNA(Sec) from L-serine and tRNA(Sec): step 1/1. In terms of biological role, catalyzes the attachment of serine to tRNA(Ser). Is also able to aminoacylate tRNA(Sec) with serine, to form the misacylated tRNA L-seryl-tRNA(Sec), which will be further converted into selenocysteinyl-tRNA(Sec). This chain is Serine--tRNA ligase, found in Rhizobium johnstonii (strain DSM 114642 / LMG 32736 / 3841) (Rhizobium leguminosarum bv. viciae).